The primary structure comprises 366 residues: Spermidine/putrescine import ATP-binding protein PotA (366 aa).

The 232-residue stretch at I8–I239 folds into the ABC transporter domain. Residue G41 to T48 participates in ATP binding.

It belongs to the ABC transporter superfamily. Spermidine/putrescine importer (TC 3.A.1.11.1) family. In terms of assembly, the complex is composed of two ATP-binding proteins (PotA), two transmembrane proteins (PotB and PotC) and a solute-binding protein (PotD).

Its subcellular location is the cell membrane. The enzyme catalyses ATP + H2O + polyamine-[polyamine-binding protein]Side 1 = ADP + phosphate + polyamineSide 2 + [polyamine-binding protein]Side 1.. Its function is as follows. Part of the ABC transporter complex PotABCD involved in spermidine/putrescine import. Responsible for energy coupling to the transport system. This is Spermidine/putrescine import ATP-binding protein PotA from Listeria monocytogenes serotype 4b (strain F2365).